Here is a 373-residue protein sequence, read N- to C-terminus: Sterol-4-alpha-carboxylate 3-dehydrogenase, decarboxylating (373 aa).

The residue at position 1 (Met1) is an N-acetylmethionine. Residue Thr22 is modified to Phosphothreonine. Tyr172 acts as the Proton acceptor in catalysis. Residue Lys176 participates in NAD(+) binding. Residues 298–318 traverse the membrane as a helical segment; sequence WVAYYLALLLSLLVMVISPVI. Residues 370–373 carry the Prevents secretion from ER motif; it reads RRVK.

Belongs to the 3-beta-HSD family. As to quaternary structure, homodimer. Brain, heart, liver, lung, kidney, skin and placenta.

It localises to the endoplasmic reticulum membrane. It is found in the lipid droplet. It carries out the reaction a 3beta-hydroxysteroid-4alpha-carboxylate + NADP(+) = a 3-oxosteroid + CO2 + NADPH. The catalysed reaction is a 3beta-hydroxysteroid-4alpha-carboxylate + NAD(+) = a 3-oxosteroid + CO2 + NADH. The enzyme catalyses 4alpha-carboxyzymosterol + NADP(+) = zymosterone + CO2 + NADPH. It catalyses the reaction 4alpha-carboxy-4beta-methyl-5alpha-cholest-8-en-3beta-ol + NADP(+) = 4alpha-methyl-5alpha-cholest-8-en-3-one + CO2 + NADPH. It carries out the reaction 4alpha-carboxy-5alpha-cholest-8-ene-3beta-ol + NADP(+) = 5alpha-cholest-8-en-3-one + CO2 + NADPH. The catalysed reaction is 4beta-methylzymosterol-4alpha-carboxylate + NADP(+) = 3-dehydro-4-methylzymosterol + CO2 + NADPH. The enzyme catalyses 4beta-methylzymosterol-4alpha-carboxylate + NAD(+) = 3-dehydro-4-methylzymosterol + CO2 + NADH. It catalyses the reaction 4alpha-carboxy-5alpha-cholest-8-ene-3beta-ol + NAD(+) = 5alpha-cholest-8-en-3-one + CO2 + NADH. It carries out the reaction 4alpha-carboxy-4beta-methyl-5alpha-cholest-8-en-3beta-ol + NAD(+) = 4alpha-methyl-5alpha-cholest-8-en-3-one + CO2 + NADH. The catalysed reaction is 4alpha-carboxyzymosterol + NAD(+) = zymosterone + CO2 + NADH. It functions in the pathway steroid biosynthesis; zymosterol biosynthesis; zymosterol from lanosterol: step 4/6. Functionally, catalyzes the NAD(P)(+)-dependent oxidative decarboxylation of the C4 methyl groups of 4-alpha-carboxysterols in post-squalene cholesterol biosynthesis. Also plays a role in the regulation of the endocytic trafficking of EGFR. The protein is Sterol-4-alpha-carboxylate 3-dehydrogenase, decarboxylating (NSDHL) of Homo sapiens (Human).